We begin with the raw amino-acid sequence, 362 residues long: Probable S-adenosylmethionine-dependent methyltransferase At5g37990 (362 aa).

S-adenosyl-L-homocysteine-binding residues include Tyr19, Cys66, Asn71, Asp107, Ser136, and Phe137. The Mg(2+) site is built by Asn175, Glu261, and Phe263.

It belongs to the methyltransferase superfamily. Type-7 methyltransferase family. As to quaternary structure, homodimer. Mg(2+) is required as a cofactor.

This chain is Probable S-adenosylmethionine-dependent methyltransferase At5g37990, found in Arabidopsis thaliana (Mouse-ear cress).